The following is a 501-amino-acid chain: Armadillo repeat-containing protein 6 (501 aa).

Ser64 carries the phosphoserine modification. 4 ARM repeats span residues 220-264, 274-318, 319-369, and 370-412; these read GVLP…HAHN, KGLK…DLGG, LSIL…RAGG, and TESI…VEGG. Residue His263 is modified to Pros-methylhistidine.

Belongs to the ARMC6 family. Post-translationally, methylated at His-263 by METTL9.

The protein is Armadillo repeat-containing protein 6 (ARMC6) of Homo sapiens (Human).